The chain runs to 166 residues: Endoribonuclease YbeY (166 aa).

Positions 132, 136, and 142 each coordinate Zn(2+).

Belongs to the endoribonuclease YbeY family. The cofactor is Zn(2+).

The protein localises to the cytoplasm. Single strand-specific metallo-endoribonuclease involved in late-stage 70S ribosome quality control and in maturation of the 3' terminus of the 16S rRNA. This is Endoribonuclease YbeY from Clostridium botulinum (strain ATCC 19397 / Type A).